The following is a 290-amino-acid chain: HTH-type transcriptional activator RhaR (290 aa).

Positions 179–277 (DLIMSALQQS…GMTPRDYRQR (99 aa)) constitute an HTH araC/xylS-type domain. DNA-binding regions (H-T-H motif) lie at residues 196 to 217 (ADFC…RQQT) and 244 to 267 (ISDI…TREA).

As to quaternary structure, binds DNA as a dimer.

The protein localises to the cytoplasm. Its function is as follows. Activates expression of the rhaSR operon in response to L-rhamnose. The chain is HTH-type transcriptional activator RhaR from Yersinia pseudotuberculosis serotype O:1b (strain IP 31758).